The primary structure comprises 389 residues: MDTFLFTSESVNEGHPDKLCDQVSDAILDACLEQDPESKVACETCSKTNMVMVFGEITTKAKVDYEKIVRDTCRGIGFVSADVGLDADNCKVLVNIEQQSPDIAQGVHGHLSKKPEEIGAGDQGHMFGYATDETPELMPLTHVLATKLGAKLTEVRKNKTCPWLRPDGKTQVTVEYRNEGGAMVPIRVHTVLISTQHDETVTNDQIAKELREHVIKPVIPSKFMDDKTIFHLNPSGRFVIGGPHGDAGLTGRKIIIDTYGGWGAHGGGAFSGKDPTKVDRSGAYIVRQAAKSVVASGLARRCLVQVSYAIGVPEPLSVFVDTYKTGKIPDKDILDLIKENFDFRPGMIAINLDLKRGGNFRFQKTAAYGHFGRDDPDFTWETVKLLKKA.

Mg(2+) is bound at residue glutamate 9. Histidine 15 provides a ligand contact to ATP. Glutamate 43 contributes to the K(+) binding site. Residues glutamate 56 and glutamine 99 each contribute to the L-methionine site. ATP contacts are provided by residues aspartate 167–lysine 169, serine 235–phenylalanine 238, aspartate 246, arginine 252–lysine 253, alanine 269, lysine 273, and lysine 277. An L-methionine-binding site is contributed by aspartate 246. Lysine 277 serves as a coordination point for L-methionine.

Belongs to the AdoMet synthase family. In terms of assembly, homotetramer. Mn(2+) serves as cofactor. Requires Mg(2+) as cofactor. Co(2+) is required as a cofactor. It depends on K(+) as a cofactor.

The protein localises to the cytoplasm. The enzyme catalyses L-methionine + ATP + H2O = S-adenosyl-L-methionine + phosphate + diphosphate. It functions in the pathway amino-acid biosynthesis; S-adenosyl-L-methionine biosynthesis; S-adenosyl-L-methionine from L-methionine: step 1/1. Functionally, catalyzes the formation of S-adenosylmethionine from methionine and ATP. The reaction comprises two steps that are both catalyzed by the same enzyme: formation of S-adenosylmethionine (AdoMet) and triphosphate, and subsequent hydrolysis of the triphosphate. The chain is S-adenosylmethionine synthase 3 (METK3) from Vitis vinifera (Grape).